Reading from the N-terminus, the 220-residue chain is Large ribosomal subunit protein bL25 (220 aa).

Residues 186–199 are compositionally biased toward acidic residues; the sequence is ELEDEDEDEDEVAA. Positions 186–220 are disordered; it reads ELEDEDEDEDEVAADEVPATEVDDQAAVKEGEGKE. Over residues 211 to 220 the composition is skewed to basic and acidic residues; that stretch reads AAVKEGEGKE.

This sequence belongs to the bacterial ribosomal protein bL25 family. CTC subfamily. In terms of assembly, part of the 50S ribosomal subunit; part of the 5S rRNA/L5/L18/L25 subcomplex. Contacts the 5S rRNA. Binds to the 5S rRNA independently of L5 and L18.

Functionally, this is one of the proteins that binds to the 5S RNA in the ribosome where it forms part of the central protuberance. This is Large ribosomal subunit protein bL25 from Christiangramia forsetii (strain DSM 17595 / CGMCC 1.15422 / KT0803) (Gramella forsetii).